The sequence spans 300 residues: Glycine--tRNA ligase alpha subunit (300 aa).

It belongs to the class-II aminoacyl-tRNA synthetase family. In terms of assembly, tetramer of two alpha and two beta subunits.

Its subcellular location is the cytoplasm. The catalysed reaction is tRNA(Gly) + glycine + ATP = glycyl-tRNA(Gly) + AMP + diphosphate. In Prochlorococcus marinus (strain MIT 9313), this protein is Glycine--tRNA ligase alpha subunit.